Consider the following 204-residue polypeptide: Oocyte-specific homeobox protein 1 (204 aa).

The segment at 28-73 is disordered; that stretch reads EPARNLAFQMRQSPLVTPGSTTKSSLSVPERNLLKQESQGPSRQSG. Composition is skewed to polar residues over residues 37–54 and 62–72; these read MRQSPLVTPGSTTKSSLS and KQESQGPSRQS. Residues 94-153 constitute a DNA-binding region (homeobox); it reads FRKERTVYTKEQQGLLQKHFDECQYPNKKKIVELALSVGVTKREIKIWFKNNRAKYRRMN.

It belongs to the paired homeobox family. Obox subfamily. As to expression, specifically expressed in oocytes and early embryos.

The protein localises to the nucleus. Transcription factor required for zygotic genome activation (ZGA), a critical event in early embryonic development during which the developmental control passes from maternally provided mRNAs to the expression of the zygotic genome after fertilization. Together with other Obox family members, required in early two-cell stage embryos to kick-start the major ZGA wave by facilitating RNA Polymerase II 'pre-configuration', during which RNA Polymerase II relocates from the initial one-cell stage binding targets to ZGA gene promoters and distal enhancers. Mechanistically, promotes recruitment of RNA Polymerase II from (CG-rich) non-ZGA genes to (CG-poor) ZGA genes at the two-cell stage. Binds to regulatory DNA sequences containing a 5'-ACNCCTTTAATCCCAG-3' sequence motif. Most maternal and zygotic Obox family proteins can compensate for one another. In addition to its role in ZGA, promotes embryonic stem cell pluripotency. The polypeptide is Oocyte-specific homeobox protein 1 (Mus musculus (Mouse)).